A 406-amino-acid polypeptide reads, in one-letter code: Nuclear hormone receptor family member nhr-133 (406 aa).

Positions 8-83 (SGPCEICEQP…VGMNSSKFQN (76 aa)) form a DNA-binding region, nuclear receptor. The NR C4-type zinc finger occupies 11–31 (CEICEQPAHGNHFGVLSCRAC). The NR C4-type; degenerate zinc finger occupies 47-66 (DRVCRKGNCIGNDLYRCKIC). The 257-residue stretch at 150–406 (YSWSPNHYPN…YSHPEMFEFS (257 aa)) folds into the NR LBD domain.

Belongs to the nuclear hormone receptor family.

It localises to the nucleus. Orphan nuclear receptor. This chain is Nuclear hormone receptor family member nhr-133, found in Caenorhabditis elegans.